Here is a 463-residue protein sequence, read N- to C-terminus: ATP synthase subunit beta (463 aa).

152-159 (GGAGVGKT) serves as a coordination point for ATP.

Belongs to the ATPase alpha/beta chains family. F-type ATPases have 2 components, CF(1) - the catalytic core - and CF(0) - the membrane proton channel. CF(1) has five subunits: alpha(3), beta(3), gamma(1), delta(1), epsilon(1). CF(0) has three main subunits: a(1), b(2) and c(9-12). The alpha and beta chains form an alternating ring which encloses part of the gamma chain. CF(1) is attached to CF(0) by a central stalk formed by the gamma and epsilon chains, while a peripheral stalk is formed by the delta and b chains.

Its subcellular location is the cell inner membrane. The catalysed reaction is ATP + H2O + 4 H(+)(in) = ADP + phosphate + 5 H(+)(out). Its function is as follows. Produces ATP from ADP in the presence of a proton gradient across the membrane. The catalytic sites are hosted primarily by the beta subunits. The protein is ATP synthase subunit beta of Shewanella oneidensis (strain ATCC 700550 / JCM 31522 / CIP 106686 / LMG 19005 / NCIMB 14063 / MR-1).